Here is a 209-residue protein sequence, read N- to C-terminus: Large ribosomal subunit protein bL9 (209 aa).

The interval 184 to 209 (SAASEDSDLVETPEDRATEEAEDEQP) is disordered.

The protein belongs to the bacterial ribosomal protein bL9 family.

Binds to the 23S rRNA. The chain is Large ribosomal subunit protein bL9 from Dinoroseobacter shibae (strain DSM 16493 / NCIMB 14021 / DFL 12).